Reading from the N-terminus, the 389-residue chain is Transmembrane protease serine 11A (389 aa).

The Cytoplasmic portion of the chain corresponds to 1–23; that stretch reads MEVAGYGTHNRDLKQWMVTLLSA. A helical; Signal-anchor for type II membrane protein transmembrane segment spans residues 24-44; it reads LSLMMVVVTIGLLALFLVFDI. The 118-residue stretch at 31-148 folds into the SEA domain; sequence VTIGLLALFL…SLVQVKDCGK (118 aa). Topologically, residues 45 to 389 are extracellular; it reads QVNSNSGQKS…RHWIASKTGL (345 aa). Residues 158 to 388 enclose the Peptidase S1 domain; the sequence is IVSGNPAAKG…YRHWIASKTG (231 aa). A disulfide bridge connects residues Cys183 and Cys199. Residues His198 and Asp243 each act as charge relay system in the active site. N-linked (GlcNAc...) asparagine glycosylation occurs at Asn274. Intrachain disulfides connect Cys308-Cys324 and Cys335-Cys364. The active-site Charge relay system is the Ser339.

It belongs to the peptidase S1 family.

It is found in the membrane. Its function is as follows. Probable serine protease which may play a role in cellular senescence. Overexpression inhibits cell growth and induce G1 cell cycle arrest. The chain is Transmembrane protease serine 11A (Tmprss11a) from Mus musculus (Mouse).